We begin with the raw amino-acid sequence, 254 residues long: 4-hydroxy-tetrahydrodipicolinate reductase (254 aa).

NAD(+) is bound at residue 13-18 (GAAGRM). Position 39 (arginine 39) interacts with NADP(+). NAD(+) contacts are provided by residues 86 to 88 (GTT) and 110 to 113 (AANT). Histidine 143 functions as the Proton donor/acceptor in the catalytic mechanism. Histidine 144 contacts (S)-2,3,4,5-tetrahydrodipicolinate. Lysine 147 acts as the Proton donor in catalysis. Position 153–154 (153–154 (GT)) interacts with (S)-2,3,4,5-tetrahydrodipicolinate.

The protein belongs to the DapB family.

The protein localises to the cytoplasm. The catalysed reaction is (S)-2,3,4,5-tetrahydrodipicolinate + NAD(+) + H2O = (2S,4S)-4-hydroxy-2,3,4,5-tetrahydrodipicolinate + NADH + H(+). The enzyme catalyses (S)-2,3,4,5-tetrahydrodipicolinate + NADP(+) + H2O = (2S,4S)-4-hydroxy-2,3,4,5-tetrahydrodipicolinate + NADPH + H(+). It participates in amino-acid biosynthesis; L-lysine biosynthesis via DAP pathway; (S)-tetrahydrodipicolinate from L-aspartate: step 4/4. Catalyzes the conversion of 4-hydroxy-tetrahydrodipicolinate (HTPA) to tetrahydrodipicolinate. This chain is 4-hydroxy-tetrahydrodipicolinate reductase, found in Zymomonas mobilis subsp. mobilis (strain ATCC 31821 / ZM4 / CP4).